We begin with the raw amino-acid sequence, 145 residues long: Conglutin (145 aa).

A signal peptide spans 1–21; it reads MAKSTILVALLALVLVAHASA. 5 disulfides stabilise this stretch: Cys35-Cys92, Cys47-Cys79, Cys80-Cys128, Cys94-Cys136, and Cys105-Cys145.

Belongs to the 2S seed storage albumins family. As to expression, expressed in seeds. Not expressed in roots, pegs (budding ovaries) or leaves.

The protein is Conglutin of Arachis hypogaea (Peanut).